The following is a 346-amino-acid chain: Phosphoribosylformylglycinamidine cyclo-ligase (346 aa).

The protein belongs to the AIR synthase family.

The protein localises to the cytoplasm. The catalysed reaction is 2-formamido-N(1)-(5-O-phospho-beta-D-ribosyl)acetamidine + ATP = 5-amino-1-(5-phospho-beta-D-ribosyl)imidazole + ADP + phosphate + H(+). Its pathway is purine metabolism; IMP biosynthesis via de novo pathway; 5-amino-1-(5-phospho-D-ribosyl)imidazole from N(2)-formyl-N(1)-(5-phospho-D-ribosyl)glycinamide: step 2/2. The chain is Phosphoribosylformylglycinamidine cyclo-ligase from Photobacterium profundum (strain SS9).